The sequence spans 241 residues: MNIKDIGVIVAKKPLKENTFIITVFTKNYGLYSGVVKASSKKSKFIYQEGNIVDFLWMARLHEHIGIAKCELIKSYTGYFITNKTKLYAFNSIISLIKELLHEREEYSNFFSFLINYLDNLSKKFFFRDYINFELALLDIAGYKLDLSKCAVSNVKQDLYYVSPKSGRALSYEVGKPYKDKLLILPKFLLSDNSKITLEEKRQALTLTNYFFNRYLFHNNRHAEARQAFMEYILHRCHPAT.

This sequence belongs to the RecO family.

Involved in DNA repair and RecF pathway recombination. The chain is DNA repair protein RecO from Rickettsia canadensis (strain McKiel).